The sequence spans 349 residues: tRNA pseudouridine synthase D (349 aa).

Position 27 (Phe-27) interacts with substrate. Asp-80 serves as the catalytic Nucleophile. Asn-129 contributes to the substrate binding site. Residues 155–303 (GVPNYFGAQR…VEAARRAMLL (149 aa)) enclose the TRUD domain. Substrate is bound at residue Phe-329.

This sequence belongs to the pseudouridine synthase TruD family.

The enzyme catalyses uridine(13) in tRNA = pseudouridine(13) in tRNA. Responsible for synthesis of pseudouridine from uracil-13 in transfer RNAs. This Klebsiella pneumoniae (strain 342) protein is tRNA pseudouridine synthase D.